A 1342-amino-acid chain; its full sequence is DNA-directed RNA polymerase subunit beta (1342 aa).

Belongs to the RNA polymerase beta chain family. As to quaternary structure, the RNAP catalytic core consists of 2 alpha, 1 beta, 1 beta' and 1 omega subunit. When a sigma factor is associated with the core the holoenzyme is formed, which can initiate transcription.

The catalysed reaction is RNA(n) + a ribonucleoside 5'-triphosphate = RNA(n+1) + diphosphate. Functionally, DNA-dependent RNA polymerase catalyzes the transcription of DNA into RNA using the four ribonucleoside triphosphates as substrates. The polypeptide is DNA-directed RNA polymerase subunit beta (Colwellia psychrerythraea (strain 34H / ATCC BAA-681) (Vibrio psychroerythus)).